The sequence spans 165 residues: Putative 4-hydroxy-4-methyl-2-oxoglutarate aldolase (165 aa).

Substrate is bound by residues Gly80–Leu83 and Arg102. A divalent metal cation is bound at residue Asp103.

It belongs to the class II aldolase/RraA-like family. Homotrimer. Requires a divalent metal cation as cofactor.

The enzyme catalyses 4-hydroxy-4-methyl-2-oxoglutarate = 2 pyruvate. It carries out the reaction oxaloacetate + H(+) = pyruvate + CO2. Functionally, catalyzes the aldol cleavage of 4-hydroxy-4-methyl-2-oxoglutarate (HMG) into 2 molecules of pyruvate. Also contains a secondary oxaloacetate (OAA) decarboxylase activity due to the common pyruvate enolate transition state formed following C-C bond cleavage in the retro-aldol and decarboxylation reactions. The chain is Putative 4-hydroxy-4-methyl-2-oxoglutarate aldolase from Cupriavidus necator (strain ATCC 17699 / DSM 428 / KCTC 22496 / NCIMB 10442 / H16 / Stanier 337) (Ralstonia eutropha).